A 220-amino-acid chain; its full sequence is uncharacterized protein (220 aa).

This is an uncharacterized protein from Bacillus subtilis (strain 168).